A 242-amino-acid polypeptide reads, in one-letter code: uncharacterized protein (242 aa).

Residues 3 to 116 form the Response regulatory domain; that stretch reads TALVIDDEQF…RLNKTVKRLN (114 aa). Aspartate 54 is modified (4-aspartylphosphate). An HTH LytTR-type domain is found at 139–240; that stretch reads IPCIGHNRIV…LKVLKEMLGI (102 aa).

This is an uncharacterized protein from Vibrio parahaemolyticus serotype O3:K6 (strain RIMD 2210633).